The sequence spans 839 residues: uncharacterized protein (839 aa).

Disordered regions lie at residues 504–611, 627–646, and 682–839; these read TVSP…NVVN, KNNNSSSNDNEYKNSNDNHC, and NHNY…SLGS. Over residues 509–611 the composition is skewed to low complexity; that stretch reads GNNNVTGDVD…EGSNNCNVVN (103 aa). The span at 636 to 646 shows a compositional bias: basic and acidic residues; sequence NEYKNSNDNHC. Low complexity-rich tracts occupy residues 689–704 and 713–753; these read NGNNENDCKNNNNNNN and QQQP…NNNK. The stretch at 726 to 764 forms a coiled coil; it reads QQSQQQPQLQQKKQQIQEEQQNLNNNNKSIEDDEEAFNS. A compositionally biased stretch (basic and acidic residues) spans 765 to 776; it reads DDEHDHEDDSIR. The segment covering 809–823 has biased composition (acidic residues); it reads EDNDDDSDISDSDSD.

This is an uncharacterized protein from Dictyostelium discoideum (Social amoeba).